We begin with the raw amino-acid sequence, 404 residues long: Multidrug resistance protein MdtG (404 aa).

The next 11 membrane-spanning stretches (helical) occupy residues 19-39 (LGCF…PLYV), 56-76 (LVFS…GGLA), 90-110 (LGMA…QFLI), 113-133 (ALLG…ATQV), 144-164 (TLST…GLLA), 171-191 (PVFF…FFFI), 222-242 (LFVT…ILTL), 254-274 (IAFI…LSAP), 288-308 (ILIV…FVQT), 317-337 (FLLG…LVYN), and 376-396 (AVFC…WNSL).

Belongs to the major facilitator superfamily. DHA1 family. MdtG (TC 2.A.1.2.20) subfamily.

Its subcellular location is the cell inner membrane. The polypeptide is Multidrug resistance protein MdtG (Salmonella typhimurium (strain LT2 / SGSC1412 / ATCC 700720)).